The sequence spans 439 residues: Argininosuccinate lyase (439 aa).

It belongs to the lyase 1 family. Argininosuccinate lyase subfamily.

It is found in the cytoplasm. The enzyme catalyses 2-(N(omega)-L-arginino)succinate = fumarate + L-arginine. It participates in amino-acid biosynthesis; L-arginine biosynthesis; L-arginine from L-ornithine and carbamoyl phosphate: step 3/3. The chain is Argininosuccinate lyase from Caldanaerobacter subterraneus subsp. tengcongensis (strain DSM 15242 / JCM 11007 / NBRC 100824 / MB4) (Thermoanaerobacter tengcongensis).